Reading from the N-terminus, the 412-residue chain is MDVNQPKQEHLLALKVMRLTKPTLFTNIPVTCEERDLPGDLFSTLMKDDPSTVKGAETLMLGEMLTLPQNFGNIFLGETFSSYISVHNDSNQVVKDIQVKADLQTSSQRLNLSASTAVVSELKPDSCIDDVIHHEVKEIGTHILVCAVSYTTQTGEKMYFRKFFKFQVLKPLDVKTKFYNAETDEVFLEAQIQNITTSPMFMEKVSLEPSIMYNVSELNTVITNGDGCSTFGTKTYLQPLDTRQYLYCLKPKPEFAEKAGVIKGVTVIGKLDIVWKTNLGERGRLQTSQLQRMAPGYGDVRLSIETIPDTVRLEEPFDITCKITNCSSERTMDLVLEMCNTNAIHWCGVSGRQLGKLHPSSSLHLTLALLSSVQGLQSVSGLRLTDTFLKRTYEYDDIAQVCVVSSKLQAES.

Belongs to the TRAPPC13 family. Part of the multisubunit TRAPP (transport protein particle) complex.

The chain is Trafficking protein particle complex subunit 13 (trappc13) from Xenopus tropicalis (Western clawed frog).